The primary structure comprises 210 residues: MPAFKPERVLVLGIGNVLWADEGFGVRCVERMAETHALPANVRLLDGGTQGLYLLPFLEEAEALIVFDAVDFGFTPGTLVTMRDDDVPAFMGAKKMSLHQTGFQDVIATAQLMGYCPSRMTLIGCQPVELEDYGGSLRPAVAGQIDFAIAEAVRELRAWGIEVTKGATISNDLVDPSLARDAYERGRPSEDEACRIGDHRFFPSAAKVRA.

The Ni(2+) site is built by E22, D68, and H99.

The protein belongs to the peptidase A31 family.

Functionally, not known. Could be involved in the processing of hydrogenase. This Rhodobacter capsulatus (Rhodopseudomonas capsulata) protein is Hydrogenase expression/formation protein HupD (hupD).